The sequence spans 423 residues: UDP-N-acetylglucosamine 1-carboxyvinyltransferase (423 aa).

Phosphoenolpyruvate is bound at residue 22 to 23 (KN). Residue Arg-93 coordinates UDP-N-acetyl-alpha-D-glucosamine. The Proton donor role is filled by Cys-117. The residue at position 117 (Cys-117) is a 2-(S-cysteinyl)pyruvic acid O-phosphothioketal. UDP-N-acetyl-alpha-D-glucosamine contacts are provided by residues 122 to 126 (RPVDL), Asp-308, and Ile-330.

It belongs to the EPSP synthase family. MurA subfamily.

It is found in the cytoplasm. It carries out the reaction phosphoenolpyruvate + UDP-N-acetyl-alpha-D-glucosamine = UDP-N-acetyl-3-O-(1-carboxyvinyl)-alpha-D-glucosamine + phosphate. The protein operates within cell wall biogenesis; peptidoglycan biosynthesis. Cell wall formation. Adds enolpyruvyl to UDP-N-acetylglucosamine. This chain is UDP-N-acetylglucosamine 1-carboxyvinyltransferase, found in Maricaulis maris (strain MCS10) (Caulobacter maris).